Consider the following 843-residue polypeptide: Protein P (843 aa).

Positions 1-177 (MPLSYQHFRK…FCGSPYSWEQ (177 aa)) are terminal protein domain (TP). Residues 178 to 346 (ELQHGRLFFK…YCLSHIVNLL (169 aa)) are spacer. The disordered stretch occupies residues 248-272 (HPTTRQSFGVEPSGSGHIDNSASNS). Residues 347–690 (EDWGPCTENG…YLNLYPVARQ (344 aa)) form a polymerase/reverse transcriptase domain (RT) region. Positions 357-600 (EHNIRIPRTP…YSLNFMGYVI (244 aa)) constitute a Reverse transcriptase domain. Mg(2+)-binding residues include Asp-429, Asp-551, and Asp-552.

Belongs to the hepadnaviridae P protein family.

The catalysed reaction is DNA(n) + a 2'-deoxyribonucleoside 5'-triphosphate = DNA(n+1) + diphosphate. It carries out the reaction Endonucleolytic cleavage to 5'-phosphomonoester.. Its activity is regulated as follows. Activated by host HSP70 and HSP40 in vitro to be able to bind the epsilon loop of the pgRNA. Because deletion of the RNase H region renders the protein partly chaperone-independent, the chaperones may be needed indirectly to relieve occlusion of the RNA-binding site by this domain. Inhibited by several reverse-transcriptase inhibitors: Lamivudine, Adefovir and Entecavir. In terms of biological role, multifunctional enzyme that converts the viral RNA genome into dsDNA in viral cytoplasmic capsids. This enzyme displays a DNA polymerase activity that can copy either DNA or RNA templates, and a ribonuclease H (RNase H) activity that cleaves the RNA strand of RNA-DNA heteroduplexes in a partially processive 3'- to 5'-endonucleasic mode. Neo-synthesized pregenomic RNA (pgRNA) are encapsidated together with the P protein, and reverse-transcribed inside the nucleocapsid. Initiation of reverse-transcription occurs first by binding the epsilon loop on the pgRNA genome, and is initiated by protein priming, thereby the 5'-end of (-)DNA is covalently linked to P protein. Partial (+)DNA is synthesized from the (-)DNA template and generates the relaxed circular DNA (RC-DNA) genome. After budding and infection, the RC-DNA migrates in the nucleus, and is converted into a plasmid-like covalently closed circular DNA (cccDNA). The activity of P protein does not seem to be necessary for cccDNA generation, and is presumably released from (+)DNA by host nuclear DNA repair machinery. The sequence is that of Protein P from Homo sapiens (Human).